We begin with the raw amino-acid sequence, 359 residues long: Probable dual-specificity RNA methyltransferase RlmN (359 aa).

The Proton acceptor role is filled by Glu93. In terms of domain architecture, Radical SAM core spans 107-337 (KSERVTLCVS…VTMRYEKGHD (231 aa)). Residues Cys114 and Cys342 are joined by a disulfide bond. 3 residues coordinate [4Fe-4S] cluster: Cys121, Cys125, and Cys128. S-adenosyl-L-methionine contacts are provided by residues 168-169 (GE), Ser200, 223-225 (SLH), and Asn299. The active-site S-methylcysteine intermediate is Cys342.

It belongs to the radical SAM superfamily. RlmN family. [4Fe-4S] cluster is required as a cofactor.

The protein localises to the cytoplasm. It carries out the reaction adenosine(2503) in 23S rRNA + 2 reduced [2Fe-2S]-[ferredoxin] + 2 S-adenosyl-L-methionine = 2-methyladenosine(2503) in 23S rRNA + 5'-deoxyadenosine + L-methionine + 2 oxidized [2Fe-2S]-[ferredoxin] + S-adenosyl-L-homocysteine. The catalysed reaction is adenosine(37) in tRNA + 2 reduced [2Fe-2S]-[ferredoxin] + 2 S-adenosyl-L-methionine = 2-methyladenosine(37) in tRNA + 5'-deoxyadenosine + L-methionine + 2 oxidized [2Fe-2S]-[ferredoxin] + S-adenosyl-L-homocysteine. Functionally, specifically methylates position 2 of adenine 2503 in 23S rRNA and position 2 of adenine 37 in tRNAs. In Akkermansia muciniphila (strain ATCC BAA-835 / DSM 22959 / JCM 33894 / BCRC 81048 / CCUG 64013 / CIP 107961 / Muc), this protein is Probable dual-specificity RNA methyltransferase RlmN.